A 252-amino-acid chain; its full sequence is ATP synthase subunit a, chloroplastic (252 aa).

Transmembrane regions (helical) follow at residues 41–61 (GQVL…TLLA), 100–120 (VPFL…GALL), 138–158 (DINT…YAGI), 204–224 (LIVG…LMLL), and 225–245 (GVFT…AYIG).

This sequence belongs to the ATPase A chain family. As to quaternary structure, F-type ATPases have 2 components, CF(1) - the catalytic core - and CF(0) - the membrane proton channel. CF(1) has five subunits: alpha(3), beta(3), gamma(1), delta(1), epsilon(1). CF(0) has four main subunits: a, b, b' and c.

It localises to the plastid. The protein resides in the chloroplast thylakoid membrane. Functionally, key component of the proton channel; it plays a direct role in the translocation of protons across the membrane. The sequence is that of ATP synthase subunit a, chloroplastic from Oedogonium cardiacum (Filamentous green alga).